Consider the following 279-residue polypeptide: Phosphonates import ATP-binding protein PhnC 2 (279 aa).

Residues 10 to 253 enclose the ABC transporter domain; it reads LSLKGVSVRY…VARNLYAKQS (244 aa). 43–50 is a binding site for ATP; it reads GASGAGKS. Residues 253–262 are compositionally biased toward low complexity; that stretch reads SNASNTSAST. Residues 253-279 are disordered; it reads SNASNTSASTDSPRTLQSSQTKELLPC. Residues 263–279 show a composition bias toward polar residues; that stretch reads DSPRTLQSSQTKELLPC.

The protein belongs to the ABC transporter superfamily. Phosphonates importer (TC 3.A.1.9.1) family. The complex is composed of two ATP-binding proteins (PhnC), two transmembrane proteins (PhnE) and a solute-binding protein (PhnD).

Its subcellular location is the cell inner membrane. The catalysed reaction is phosphonate(out) + ATP + H2O = phosphonate(in) + ADP + phosphate + H(+). Its function is as follows. Part of the ABC transporter complex PhnCDE involved in phosphonates import. Responsible for energy coupling to the transport system. This chain is Phosphonates import ATP-binding protein PhnC 2, found in Cupriavidus metallidurans (strain ATCC 43123 / DSM 2839 / NBRC 102507 / CH34) (Ralstonia metallidurans).